We begin with the raw amino-acid sequence, 222 residues long: Prolactin-3B1 (222 aa).

The first 31 residues, 1–31 (MKLSLSQPCSFSGALLLLAVSNLLVWEKVTS), serve as a signal peptide directing secretion. Intrachain disulfides connect Cys-82–Cys-197 and Cys-214–Cys-222.

This sequence belongs to the somatotropin/prolactin family.

It is found in the secreted. This chain is Prolactin-3B1 (Prl3b1), found in Mus musculus (Mouse).